A 565-amino-acid chain; its full sequence is Wee1-like protein kinase 2 (565 aa).

2 stretches are compositionally biased toward basic and acidic residues: residues 1 to 12 (MGDNGDNKELKQ) and 26 to 52 (EGQKEAQESKKVQYHTPERCGHQDSEA). Disordered regions lie at residues 1–142 (MGDN…TPGP) and 169–189 (KSNGKRKTRRDLEEAGPEEGK). A Phosphoserine modification is found at Ser-77. Residues 173-175 (KRK) carry the Nuclear localization signal motif. The segment covering 178–189 (RDLEEAGPEEGK) has biased composition (basic and acidic residues). The 279-residue stretch at 214–492 (FLEVEKIGVG…TRSRVLCPSL (279 aa)) folds into the Protein kinase domain. ATP-binding positions include 220–228 (IGVGEFGTV) and Lys-243. The short motif at 317-331 (KLKDILLQISLGLKY) is the Nuclear export signal element. Catalysis depends on Asp-341, which acts as the Proton acceptor. Mg(2+) contacts are provided by Asn-346 and Asp-382. A coiled-coil region spans residues 495-521 (TEELQQQLNLEKFKTATLERELKEVQR). The segment at 518-565 (EVQRAQSSKEGQSSPGVTGTHTGSRSTRRLVGGKSAKSSSFTWGQSSP) is disordered. 2 stretches are compositionally biased toward polar residues: residues 521–534 (RAQSSKEGQSSPGV) and 553–565 (AKSSSFTWGQSSP).

Belongs to the protein kinase superfamily. Ser/Thr protein kinase family. WEE1 subfamily. In terms of processing, phosphorylation leads to increase its activity. As to expression, ovary-specific.

The protein localises to the nucleus. It catalyses the reaction L-tyrosyl-[protein] + ATP = O-phospho-L-tyrosyl-[protein] + ADP + H(+). In terms of biological role, oocyte-specific protein tyrosine kinase that phosphorylates and inhibits CDK1 and acts as a key regulator of meiosis during both prophase I and metaphase II. Required to maintain meiotic arrest in oocytes during the germinal vesicle (GV) stage, a long period of quiescence at dictyate prophase I, by phosphorylating CDK1 at 'Tyr-15', leading to inhibit CDK1 activity and prevent meiotic reentry. Also required for metaphase II exit during egg activation by phosphorylating CDK1 at 'Tyr-15', to ensure exit from meiosis in oocytes and promote pronuclear formation. In Sus scrofa (Pig), this protein is Wee1-like protein kinase 2 (WEE2).